Consider the following 223-residue polypeptide: Killer cell lectin-like receptor subfamily B member 1B allele B (223 aa).

The Cytoplasmic portion of the chain corresponds to 1–43 (MDSTTLVYADLNLARIQEPKHDSPPSLSPDTCRCPRWHRLALK). The ITIM motif signature appears at 6-11 (LVYADL). The LCK-binding motif motif lies at 32 to 35 (CRCP). Residues 44–64 (FGCAGLILLVLVVIGLCVLVL) form a helical; Signal-anchor for type II membrane protein membrane-spanning segment. Residues 65 to 223 (SVQKSSVQKI…LNHETPCNDS (159 aa)) lie on the Extracellular side of the membrane. The C-type lectin domain maps to 101–211 (HRDKCFHVSQ…CSSDNRWICQ (111 aa)). Intrachain disulfides connect Cys-122/Cys-210 and Cys-189/Cys-202.

Homodimer; disulfide-linked. Interacts with tyrosine kinase LCK. Binds PTPN6/SHP-1 in a phosphorylation-dependent manner. Expressed in NK cells and a subset of T-cells.

Its subcellular location is the membrane. Its function is as follows. Receptor for CLEC2D/OCIL. Ligand-binding contributes to inhibition of cytotoxic natural killer (NK) cells. May mediate MHC class I-independent 'missing-self' recognition of allografts, tumor cells and virus-infected cells. The chain is Killer cell lectin-like receptor subfamily B member 1B allele B (Klrb1b) from Mus musculus (Mouse).